Consider the following 530-residue polypeptide: uncharacterized protein (530 aa).

Basic and acidic residues-rich tracts occupy residues 1–11 (MTALNDTERAV) and 28–38 (PRSEETASERP). Residues 1 to 38 (MTALNDTERAVRNWTAGRPHRPAPMRPPRSEETASERP) are disordered. The Cytoplasmic portion of the chain corresponds to 1–50 (MTALNDTERAVRNWTAGRPHRPAPMRPPRSEETASERPSRYYPTWLPSRS). A helical membrane pass occupies residues 51–71 (FIAAVIAIGGMQLLATMDSTV). At 72-91 (AIVALPKIQNELSLSDAGRS) the chain is on the extracellular side. Residues 92-112 (WVITAYVLTFGGLMLLGGRLG) form a helical membrane-spanning segment. Topologically, residues 113-119 (DTIGRKR) are cytoplasmic. A helical membrane pass occupies residues 120–140 (TFIVGVALFTISSVLCAVAWD). At 141–150 (EATLVIARLS) the chain is on the extracellular side. Residues 151-171 (QGVGSAIASPTGLALVATTFP) traverse the membrane as a helical segment. Residues 172-180 (KGPARNAAT) lie on the Cytoplasmic side of the membrane. The chain crosses the membrane as a helical span at residues 181 to 201 (AVFAAMTAIGSVMGLVVGGAL). At 202 to 203 (TE) the chain is on the extracellular side. A helical transmembrane segment spans residues 204–224 (VSWRWAFLVNVPIGLVMIYLA). Over 225–239 (RTALRETNKERMKLD) the chain is Cytoplasmic. Residues 240 to 260 (ATGAILATLACTAAVFAFSIG) form a helical membrane-spanning segment. Residues 261–266 (PEKGWM) are Extracellular-facing. The chain crosses the membrane as a helical span at residues 267–287 (SGITIGSGLVALAAAVAFVIV). The Cytoplasmic segment spans residues 288–306 (ERTAENPVVPFHLFRDRNR). A helical transmembrane segment spans residues 307–327 (LVTFSAILLAGGVMFSLTVCI). Residues 328-343 (GLYVQDILGYSALRAG) are Extracellular-facing. Residues 344–364 (VGFIPFVIAMGIGLGVSSQLV) form a helical membrane-spanning segment. Over 365–370 (SRFSPR) the chain is Cytoplasmic. The chain crosses the membrane as a helical span at residues 371 to 391 (VLTIGGGYLLFGAMLYGSFFM). At 392 to 400 (HRGVPYFPN) the chain is on the extracellular side. Residues 401 to 421 (LVMPIVVGGIGIGMAVVPLTL) traverse the membrane as a helical segment. Residues 422-437 (SAIAGVGFDQIGPVSA) lie on the Cytoplasmic side of the membrane. Residues 438 to 458 (IALMLQSLGGPLVLAVIQAVI) traverse the membrane as a helical segment. At 459-488 (TSRTLYLGGTTGPVKFMNDVQLAALDHAYT) the chain is on the extracellular side. Residues 489 to 509 (YGLLWVAGAAIIVGGMALFIG) form a helical membrane-spanning segment. At 510 to 530 (YTPQQVAHAQEVKEAIDAGEL) the chain is on the cytoplasmic side.

This sequence belongs to the major facilitator superfamily.

The protein resides in the cell membrane. This is an uncharacterized protein from Mycobacterium tuberculosis (strain CDC 1551 / Oshkosh).